The chain runs to 170 residues: AP-5 complex subunit sigma-1 (170 aa).

As to quaternary structure, probably part of the adaptor protein complex 5 (AP-5) a tetramer composed of AP5B1, AP5M1, AP5S1 and AP5Z1. Interacts with ZFYVE26 and SPG11.

It is found in the cytoplasm. The protein localises to the cytosol. Its subcellular location is the late endosome membrane. It localises to the lysosome membrane. Its function is as follows. As part of AP-5, a probable fifth adaptor protein complex it may be involved in endosomal transport. This is AP-5 complex subunit sigma-1 (Ap5s1) from Mus musculus (Mouse).